Consider the following 225-residue polypeptide: UPF0758 protein BPP1850 (225 aa).

The MPN domain occupies 103–225; it reads ALANPDLVRR…TVSMAAQGHL (123 aa). Zn(2+) is bound by residues His174, His176, and Asp187. The JAMM motif motif lies at 174-187; the sequence is HNHPGGTAAASAAD.

The protein belongs to the UPF0758 family.

The protein is UPF0758 protein BPP1850 of Bordetella parapertussis (strain 12822 / ATCC BAA-587 / NCTC 13253).